Here is a 203-residue protein sequence, read N- to C-terminus: Histidine biosynthesis bifunctional protein HisIE (203 aa).

The segment at 1 to 114 (MLTEQQRREL…FGDASHQWLF (114 aa)) is phosphoribosyl-AMP cyclohydrolase. Residues 115 to 203 (LYQLEQLLAE…VIDDLRKRHQ (89 aa)) are phosphoribosyl-ATP pyrophosphohydrolase.

It in the N-terminal section; belongs to the PRA-CH family. The protein in the C-terminal section; belongs to the PRA-PH family.

It is found in the cytoplasm. The enzyme catalyses 1-(5-phospho-beta-D-ribosyl)-ATP + H2O = 1-(5-phospho-beta-D-ribosyl)-5'-AMP + diphosphate + H(+). The catalysed reaction is 1-(5-phospho-beta-D-ribosyl)-5'-AMP + H2O = 1-(5-phospho-beta-D-ribosyl)-5-[(5-phospho-beta-D-ribosylamino)methylideneamino]imidazole-4-carboxamide. It functions in the pathway amino-acid biosynthesis; L-histidine biosynthesis; L-histidine from 5-phospho-alpha-D-ribose 1-diphosphate: step 2/9. Its pathway is amino-acid biosynthesis; L-histidine biosynthesis; L-histidine from 5-phospho-alpha-D-ribose 1-diphosphate: step 3/9. This chain is Histidine biosynthesis bifunctional protein HisIE (hisI), found in Salmonella typhi.